Reading from the N-terminus, the 181-residue chain is 6,7-dimethyl-8-ribityllumazine synthase (181 aa).

5-amino-6-(D-ribitylamino)uracil contacts are provided by residues Tyr27, 58 to 60 (ALE), and 87 to 89 (CVI). 92–93 (ET) contacts (2S)-2-hydroxy-3-oxobutyl phosphate. Catalysis depends on His95, which acts as the Proton donor. Residue Asn120 participates in 5-amino-6-(D-ribitylamino)uracil binding. Arg134 serves as a coordination point for (2S)-2-hydroxy-3-oxobutyl phosphate.

Belongs to the DMRL synthase family.

The enzyme catalyses (2S)-2-hydroxy-3-oxobutyl phosphate + 5-amino-6-(D-ribitylamino)uracil = 6,7-dimethyl-8-(1-D-ribityl)lumazine + phosphate + 2 H2O + H(+). It participates in cofactor biosynthesis; riboflavin biosynthesis; riboflavin from 2-hydroxy-3-oxobutyl phosphate and 5-amino-6-(D-ribitylamino)uracil: step 1/2. Its function is as follows. Catalyzes the formation of 6,7-dimethyl-8-ribityllumazine by condensation of 5-amino-6-(D-ribitylamino)uracil with 3,4-dihydroxy-2-butanone 4-phosphate. This is the penultimate step in the biosynthesis of riboflavin. The protein is 6,7-dimethyl-8-ribityllumazine synthase of Methylobacterium sp. (strain 4-46).